Consider the following 354-residue polypeptide: Arginase-2, mitochondrial (354 aa).

The transit peptide at 1-22 (MSYGSCVSRLLRTRVQSVLKKS) directs the protein to the mitochondrion. Mn(2+) contacts are provided by His120, Asp143, His145, and Asp147. Substrate is bound by residues 145-149 (HADIN), 156-158 (SGN), and Asp202. Residues Asp251 and Asp253 each contribute to the Mn(2+) site. Substrate is bound by residues Thr265 and Glu296. Residues 330–354 (GHTVYEQLPPPSSPHESENAERVRI) are disordered. Over residues 344 to 354 (HESENAERVRI) the composition is skewed to basic and acidic residues.

It belongs to the arginase family. As to quaternary structure, homotrimer. It depends on Mn(2+) as a cofactor.

It localises to the mitochondrion. The catalysed reaction is L-arginine + H2O = urea + L-ornithine. It participates in nitrogen metabolism; urea cycle; L-ornithine and urea from L-arginine: step 1/1. May play a role in the regulation of extra-urea cycle arginine metabolism and also in down-regulation of nitric oxide synthesis. Extrahepatic arginase functions to regulate L-arginine bioavailability to nitric oxid synthase (NOS). Arginine metabolism is a critical regulator of innate and adaptive immune responses. Seems to be involved in negative regulation of the survival capacity of activated T cells. May suppress inflammation-related signaling in asthmatic airway epithelium. May play a role in promoting prenatal immune suppression. Regulates RPS6KB1 signaling, which promotes endothelial cell senescence and inflammation and implicates NOS3/eNOS dysfunction. Can inhibit endothelial autophagy independently of its enzymatic activity implicating mTORC2 signaling. Involved in vascular smooth muscle cell senescence and apoptosis independently of its enzymatic activity. This chain is Arginase-2, mitochondrial (ARG2), found in Oryctolagus cuniculus (Rabbit).